The primary structure comprises 197 residues: uncharacterized protein (197 aa).

The 152-residue stretch at 33–184 folds into the SIS domain; it reads MISKIMDASS…IAEFMSILGK (152 aa).

It belongs to the SIS family. PHI subfamily.

This is an uncharacterized protein from Methanothermobacter thermautotrophicus (strain ATCC 29096 / DSM 1053 / JCM 10044 / NBRC 100330 / Delta H) (Methanobacterium thermoautotrophicum).